The chain runs to 172 residues: Adenylate kinase isoenzyme 6 (172 aa).

The ATP site is built by glycine 13, glycine 15, lysine 16, threonine 17, and threonine 18. Residues 33-56 (NVGDLAREGQLYDGYDEEYDCPIL) are NMPbind. Residues 108–118 (NRGYNEKKLKD) form an LID region. ATP contacts are provided by arginine 109 and lysine 148.

This sequence belongs to the adenylate kinase family. AK6 subfamily. Monomer and homodimer. Interacts with small ribosomal subunit protein uS11. Not a structural component of 43S pre-ribosomes, but transiently interacts with them by binding to uS11. Interacts with COIL (via C-terminus).

The protein localises to the cytoplasm. Its subcellular location is the nucleus. The protein resides in the nucleoplasm. It localises to the cajal body. The enzyme catalyses AMP + ATP = 2 ADP. The catalysed reaction is ATP + H2O = ADP + phosphate + H(+). In terms of biological role, broad-specificity nucleoside monophosphate (NMP) kinase that catalyzes the reversible transfer of the terminal phosphate group between nucleoside triphosphates and monophosphates. Also has ATPase activity. Involved in the late cytoplasmic maturation steps of the 40S ribosomal particles, specifically 18S rRNA maturation. While NMP activity is not required for ribosome maturation, ATPase activity is. Associates transiently with small ribosomal subunit protein uS11. ATP hydrolysis breaks the interaction with uS11. May temporarily remove uS11 from the ribosome to enable a conformational change of the ribosomal RNA that is needed for the final maturation step of the small ribosomal subunit. Its NMP activity may have a role in nuclear energy homeostasis. May be involved in regulation of Cajal body (CB) formation. The chain is Adenylate kinase isoenzyme 6 from Bos taurus (Bovine).